The primary structure comprises 1254 residues: DNA-directed RNA polymerase subunit beta' (1254 aa).

Zn(2+) is bound by residues cysteine 59, cysteine 61, cysteine 76, and cysteine 79. Mg(2+) is bound by residues aspartate 501, aspartate 503, and aspartate 505. The Zn(2+) site is built by cysteine 871, cysteine 946, cysteine 953, and cysteine 956.

The protein belongs to the RNA polymerase beta' chain family. As to quaternary structure, the RNAP catalytic core consists of 2 alpha, 1 beta, 1 beta' and 1 omega subunit. When a sigma factor is associated with the core the holoenzyme is formed, which can initiate transcription. Requires Mg(2+) as cofactor. Zn(2+) is required as a cofactor.

It catalyses the reaction RNA(n) + a ribonucleoside 5'-triphosphate = RNA(n+1) + diphosphate. Functionally, DNA-dependent RNA polymerase catalyzes the transcription of DNA into RNA using the four ribonucleoside triphosphates as substrates. This chain is DNA-directed RNA polymerase subunit beta', found in Mesoplasma florum (strain ATCC 33453 / NBRC 100688 / NCTC 11704 / L1) (Acholeplasma florum).